The primary structure comprises 130 residues: Small ribosomal subunit protein uS9 (130 aa).

It belongs to the universal ribosomal protein uS9 family.

This is Small ribosomal subunit protein uS9 from Brevibacillus brevis (strain 47 / JCM 6285 / NBRC 100599).